Reading from the N-terminus, the 156-residue chain is ATP synthase subunit b (156 aa).

The helical transmembrane segment at Leu7–Pro27 threads the bilayer.

Belongs to the ATPase B chain family. In terms of assembly, F-type ATPases have 2 components, F(1) - the catalytic core - and F(0) - the membrane proton channel. F(1) has five subunits: alpha(3), beta(3), gamma(1), delta(1), epsilon(1). F(0) has three main subunits: a(1), b(2) and c(10-14). The alpha and beta chains form an alternating ring which encloses part of the gamma chain. F(1) is attached to F(0) by a central stalk formed by the gamma and epsilon chains, while a peripheral stalk is formed by the delta and b chains.

It localises to the cell inner membrane. Its function is as follows. F(1)F(0) ATP synthase produces ATP from ADP in the presence of a proton or sodium gradient. F-type ATPases consist of two structural domains, F(1) containing the extramembraneous catalytic core and F(0) containing the membrane proton channel, linked together by a central stalk and a peripheral stalk. During catalysis, ATP synthesis in the catalytic domain of F(1) is coupled via a rotary mechanism of the central stalk subunits to proton translocation. In terms of biological role, component of the F(0) channel, it forms part of the peripheral stalk, linking F(1) to F(0). The sequence is that of ATP synthase subunit b from Paraburkholderia xenovorans (strain LB400).